Here is a 495-residue protein sequence, read N- to C-terminus: MRLTRCQAALAAAITLNLLVLFYVSWLQHQPRNSRARGPRRASAAGPRVTVLVREFEAFDNAVPELVDSFLQQDPAQPVVVAADTLPYPPLALPRIPNVRLALLQPALDRPAAASRPETYVATEFVALVPDGARAEAPGLLERMVEALRAGSARLVAAPVATANPARCLALNVSLREWTARYGAAPAAPRCDALDGDAVVLLRARDLFNLSAPLARPVGTSLFLQTALRGWAVQLLDLTFAAARQPPLATAHARWKAEREGRARRAALLRALGIRLVSWEGGRLEWFGCNKETTRCFGTVVGDTPAYLYEERWTPPCCLRALRETARYVVGVLEAAGVRYWLEGGSLLGAARHGDIIPWDYDVDLGIYLEDVGNCEQLRGAEAGSVVDERGFVWEKAVEGDFFRVQYSESNHLHVDLWPFYPRNGVMTKDTWLDHRQDVEFPEHFLQPLVPLPFAGFVAQAPNNYRRFLELKFGPGVIENPQYPNPALLSLTGSG.

At 1–6 (MRLTRC) the chain is on the cytoplasmic side. A helical membrane pass occupies residues 7–29 (QAALAAAITLNLLVLFYVSWLQH). The Lumenal portion of the chain corresponds to 30 to 495 (QPRNSRARGP…PALLSLTGSG (466 aa)). An intrachain disulfide couples C168 to C191. 2 N-linked (GlcNAc...) asparagine glycosylation sites follow: N172 and N209. 4 residues coordinate Zn(2+): C289, C296, C317, and C318. Positions 289–318 (CNKETTRCFGTVVGDTPAYLYEERWTPPCC) are zinc finger loop. CDP-L-ribitol is bound by residues G345, R352, 359-364 (WDYDVD), 437-438 (QD), and 480-482 (NPQ). Positions 360, 362, and 364 each coordinate Mg(2+).

The protein belongs to the LicD transferase family. In terms of assembly, homodimer; disulfide-linked. Tetramer. Forms a complex composed of FKRP, FKTN/fukutin, and RXYLT1/TMEM5. Also exists as large multimeric protein complexes. May interact with the dystrophin-glycoprotein complex (DGC). Mg(2+) serves as cofactor. Post-translationally, N-glycosylated. Expressed in the retina (at protein level). Expressed predominantly in skeletal muscle, placenta, and heart and relatively weakly in brain, lung, liver, kidney, and pancreas.

The protein resides in the golgi apparatus membrane. Its subcellular location is the secreted. It localises to the cell membrane. The protein localises to the sarcolemma. It is found in the rough endoplasmic reticulum. The protein resides in the cytoplasm. It carries out the reaction 3-O-[Rib-ol-P-3-beta-D-GalNAc-(1-&gt;3)-beta-D-GlcNAc-(1-&gt;4)-(O-6-P-alpha-D-Man)]-Thr-[protein] + CDP-L-ribitol = 3-O-[Rib-ol-P-Rib-ol-P-3-beta-D-GalNAc-(1-&gt;3)-beta-D-GlcNAc-(1-&gt;4)-(O-6-P-alpha-D-Man)]-Thr-[protein] + CMP + H(+). The protein operates within protein modification; protein glycosylation. Functionally, catalyzes the transfer of a ribitol 5-phosphate from CDP-L-ribitol to the ribitol 5-phosphate previously attached by FKTN/fukutin to the phosphorylated O-mannosyl trisaccharide (N-acetylgalactosamine-beta-3-N-acetylglucosamine-beta-4-(phosphate-6-)mannose), a carbohydrate structure present in alpha-dystroglycan (DAG1). This constitutes the second step in the formation of the ribose 5-phosphate tandem repeat which links the phosphorylated O-mannosyl trisaccharide to the ligand binding moiety composed of repeats of 3-xylosyl-alpha-1,3-glucuronic acid-beta-1. In Homo sapiens (Human), this protein is Ribitol 5-phosphate transferase FKRP.